The primary structure comprises 836 residues: Serine/threonine-protein kinase ppk5 (836 aa).

Disordered stretches follow at residues 1–29 (MVGL…FLSP), 192–214 (INQL…TLSS), 230–307 (CSQF…YKSI), and 328–381 (TPLD…ERQN). 3 stretches are compositionally biased toward polar residues: residues 192-205 (INQL…TNYP), 232-241 (QFASPRSSIV), and 265-288 (KPSN…TKLT). A compositionally biased stretch (basic and acidic residues) spans 289–298 (SQRDNDHQKD). The segment covering 338-347 (SGKKFNKNSK) has biased composition (basic residues). A compositionally biased stretch (low complexity) spans 353–362 (STISSYSSAS). The region spanning 518–814 (YEIIDTVGKG…VDSALQHEFI (297 aa)) is the Protein kinase domain. ATP contacts are provided by residues 524-532 (VGKGSFGQV) and lysine 547. Residue aspartate 644 is the Proton acceptor of the active site. Position 678 is a phosphotyrosine (tyrosine 678).

Belongs to the protein kinase superfamily. CMGC Ser/Thr protein kinase family. MNB/DYRK subfamily.

It localises to the cytoplasm. The catalysed reaction is L-seryl-[protein] + ATP = O-phospho-L-seryl-[protein] + ADP + H(+). It catalyses the reaction L-threonyl-[protein] + ATP = O-phospho-L-threonyl-[protein] + ADP + H(+). Its function is as follows. Has a role in meiosis. This Schizosaccharomyces pombe (strain 972 / ATCC 24843) (Fission yeast) protein is Serine/threonine-protein kinase ppk5 (ppk5).